The chain runs to 406 residues: MQHNSLIARFAQGNLVLQILVGIILGISLALVSPSSAESVGMLGSLFVGALKAIAPILVFILVAASIANQKKNQHTHMRPIIAMYLAGTFFAALTAVVLSFMFPTTLTLVTGAEGANPPQGILEVIKTLLFKLVDNPVNALMSANYIGILAWGVGLGLALHHASDTTKAVFEDLSHSVSHIVRFIIRLAPFGIFGLVASTFATTGFDALAGYAHLLVVLLSAMAIIALIVNPAMVYVKTKQNPYPLVFQCLRESGVTAFFTRSSAANIPVNMALCEKLKLDEDTYSVSIPLGATINMAGAAITITTLTLAAVHTMGIEVDLMTAILLSVVAAVSACGASGVAGGSLLLIPLACGLFGISNDIAMQVVAVGFIIGVIQDSAETALNSSTDVVFTAAVCESEAQKAKG.

9 helical membrane passes run 15–35 (LVLQILVGIILGISLALVSPS), 47–67 (FVGALKAIAPILVFILVAASI), 81–101 (IIAMYLAGTFFAALTAVVLSF), 140–160 (ALMSANYIGILAWGVGLGLAL), 191–211 (FGIFGLVASTFATTGFDALAG), 215–235 (LLVVLLSAMAIIALIVNPAMV), 289–309 (IPLGATINMAGAAITITTLTL), 315–335 (MGIEVDLMTAILLSVVAAVSA), and 362–382 (IAMQVVAVGFIIGVIQDSAET).

The protein belongs to the dicarboxylate/amino acid:cation symporter (DAACS) (TC 2.A.23) family.

The protein resides in the cell inner membrane. The enzyme catalyses L-serine(in) + Na(+)(in) = L-serine(out) + Na(+)(out). The catalysed reaction is L-threonine(in) + Na(+)(in) = L-threonine(out) + Na(+)(out). Involved in the import of serine and threonine into the cell, with the concomitant import of sodium (symport system). The chain is Serine/threonine transporter SstT from Vibrio vulnificus (strain CMCP6).